A 323-amino-acid polypeptide reads, in one-letter code: MSNNNSKQEFVPNIQLKEDLGAFSYKVQLSPVEKGMAHILGNSIRRVLLSSLSGASIIKVNIANVLHEYSTLEDVKEDVVEIVSNLKKVAIKLDTAIDRLDLELSVNKSGVVSAGDFKTTQGVEIINKDQPIATLTNQRAFSLTATVSVGRNVGILSAIPTELERVGDIAVDADFNPIKRVAFEVFDNGDSETLEVFVKTNGTIEPLAAVTKALEYFCEQISVFVSLRVPSNGKTGDVLIDSNIDPILLKPIDDLELTVRSSNCLRAENIKYLGDLVQYSESQLMKIPNLGKKSLNEIKQILIDNNLSLGVQIDNFRELVEGK.

Residues 1 to 228 (MSNNNSKQEF…EQISVFVSLR (228 aa)) are alpha N-terminal domain (alpha-NTD). The segment at 244-323 (IDPILLKPID…DNFRELVEGK (80 aa)) is alpha C-terminal domain (alpha-CTD).

This sequence belongs to the RNA polymerase alpha chain family. As to quaternary structure, homodimer. The RNAP catalytic core consists of 2 alpha, 1 beta, 1 beta' and 1 omega subunit. When a sigma factor is associated with the core the holoenzyme is formed, which can initiate transcription.

It catalyses the reaction RNA(n) + a ribonucleoside 5'-triphosphate = RNA(n+1) + diphosphate. DNA-dependent RNA polymerase catalyzes the transcription of DNA into RNA using the four ribonucleoside triphosphates as substrates. The protein is DNA-directed RNA polymerase subunit alpha 1 of Francisella tularensis subsp. novicida (strain U112).